The primary structure comprises 332 residues: Fructose-1,6-bisphosphatase class 1 (332 aa).

The Mg(2+) site is built by Glu-89, Asp-110, Leu-112, and Asp-113. Residues 113–116, Asn-206, Tyr-239, 257–259, and Lys-269 each bind substrate; these read DGSS and YLY. Glu-275 is a binding site for Mg(2+).

It belongs to the FBPase class 1 family. Homotetramer. Mg(2+) is required as a cofactor.

It is found in the cytoplasm. The enzyme catalyses beta-D-fructose 1,6-bisphosphate + H2O = beta-D-fructose 6-phosphate + phosphate. It participates in carbohydrate biosynthesis; gluconeogenesis. The polypeptide is Fructose-1,6-bisphosphatase class 1 (Salmonella gallinarum (strain 287/91 / NCTC 13346)).